Consider the following 108-residue polypeptide: Abscisic stress-ripening protein 3 (108 aa).

2 disordered regions span residues 1–34 (MAEE…HHSH) and 84–108 (FAFH…GRHH). The span at 15–24 (NREEEGGPVD) shows a compositional bias: basic and acidic residues. Positions 25-34 (HKKKVKHHSH) are enriched in basic residues. Basic and acidic residues predominate over residues 95 to 108 (AKKEKKAAEKGRHH).

Belongs to the abscisic acid and water stress-induced protein family.

In Solanum lycopersicum (Tomato), this protein is Abscisic stress-ripening protein 3.